The chain runs to 210 residues: MSKFIVIEGLEGAGKSTAIKNVLATLAKHGITSPVTTREPGGTPLAEKMRELVKQGHPDEPLTDMAELLLLYAARAQLVGNVIKPALAKGEWVVGDRHDLSSQAYQGGGRGFDRDLMMTMRNTVLGDFKPDLTIYMDIDPKLGLQRASARGELDRIEQMKLDFFERSRERYLEFANSDESIITIDAGQDLETVTQSIITALEAWLVNNGY.

Residue 9–16 (GLEGAGKS) participates in ATP binding.

The protein belongs to the thymidylate kinase family.

The catalysed reaction is dTMP + ATP = dTDP + ADP. Its function is as follows. Phosphorylation of dTMP to form dTDP in both de novo and salvage pathways of dTTP synthesis. This is Thymidylate kinase from Aliivibrio fischeri (strain MJ11) (Vibrio fischeri).